The primary structure comprises 396 residues: Elongation factor Tu (396 aa).

The 197-residue stretch at 10–206 (KPHCNIGTIG…QVDAYIPQPE (197 aa)) folds into the tr-type G domain. The interval 19–26 (GHVDHGKT) is G1. 19-26 (GHVDHGKT) is a GTP binding site. Threonine 26 serves as a coordination point for Mg(2+). The interval 60–64 (GITIS) is G2. Residues 81 to 84 (DCPG) are G3. GTP is bound by residues 81–85 (DCPGH) and 136–139 (NKCD). Residues 136 to 139 (NKCD) are G4. The G5 stretch occupies residues 174-176 (SAL).

The protein belongs to the TRAFAC class translation factor GTPase superfamily. Classic translation factor GTPase family. EF-Tu/EF-1A subfamily. In terms of assembly, monomer.

It localises to the cytoplasm. The catalysed reaction is GTP + H2O = GDP + phosphate + H(+). Functionally, GTP hydrolase that promotes the GTP-dependent binding of aminoacyl-tRNA to the A-site of ribosomes during protein biosynthesis. The sequence is that of Elongation factor Tu from Rhodopseudomonas palustris (strain ATCC BAA-98 / CGA009).